A 245-amino-acid polypeptide reads, in one-letter code: Probable transcriptional regulatory protein APH_0480 (245 aa).

This sequence belongs to the TACO1 family.

Its subcellular location is the cytoplasm. The protein is Probable transcriptional regulatory protein APH_0480 of Anaplasma phagocytophilum (strain HZ).